The following is a 139-amino-acid chain: MILLDTNVISEPQRREPNAHVLDWIDAQALETLYLSTITVAELRAGIALMPVGKRQDSLRENLEKHLLPMFANRVLSFDMTCTKAYAELLAKSRAAGLAVETADAFIAAIALANGFTVATRDTGPFEAAGLNVINPWEA.

A PINc domain is found at 2-136; the sequence is ILLDTNVISE…EAAGLNVINP (135 aa). Residues Asp5 and Asp104 each coordinate Mg(2+).

Belongs to the PINc/VapC protein family. Requires Mg(2+) as cofactor.

In terms of biological role, toxic component of a type II toxin-antitoxin (TA) system. An RNase. Involved in plasmid stability. The protein is Plasmid stability protein StbB (stbB) of Pseudomonas syringae pv. tomato (strain ATCC BAA-871 / DC3000).